A 214-amino-acid polypeptide reads, in one-letter code: Pyridoxine/pyridoxamine 5'-phosphate oxidase (214 aa).

Substrate-binding positions include 8–11 (RTNY) and Lys-66. Residues 61–66 (RIVLIK), 76–77 (FT), Arg-82, Lys-83, and Gln-105 contribute to the FMN site. Positions 123, 127, and 131 each coordinate substrate. FMN contacts are provided by residues 140–141 (QS) and Trp-184. Position 190–192 (190–192 (RLH)) interacts with substrate. Arg-194 is an FMN binding site.

This sequence belongs to the pyridoxamine 5'-phosphate oxidase family. In terms of assembly, homodimer. Requires FMN as cofactor.

It catalyses the reaction pyridoxamine 5'-phosphate + O2 + H2O = pyridoxal 5'-phosphate + H2O2 + NH4(+). It carries out the reaction pyridoxine 5'-phosphate + O2 = pyridoxal 5'-phosphate + H2O2. Its pathway is cofactor metabolism; pyridoxal 5'-phosphate salvage; pyridoxal 5'-phosphate from pyridoxamine 5'-phosphate: step 1/1. The protein operates within cofactor metabolism; pyridoxal 5'-phosphate salvage; pyridoxal 5'-phosphate from pyridoxine 5'-phosphate: step 1/1. Its function is as follows. Catalyzes the oxidation of either pyridoxine 5'-phosphate (PNP) or pyridoxamine 5'-phosphate (PMP) into pyridoxal 5'-phosphate (PLP). The protein is Pyridoxine/pyridoxamine 5'-phosphate oxidase of Burkholderia pseudomallei (strain 1106a).